We begin with the raw amino-acid sequence, 113 residues long: Protein S100-A9 (113 aa).

The residue at position 2 (Ala2) is an N-acetylalanine. 2 EF-hand domains span residues Ile13–Thr48 and Arg55–Ala90. Residue His21 participates in Zn(2+) binding. Ca(2+) contacts are provided by Ser24 and His29. Position 31 (Asp31) interacts with Zn(2+). Residues Thr32, Glu37, Asp68, Asn70, Asp72, Gln74, and Glu79 each contribute to the Ca(2+) site. Zn(2+) contacts are provided by His92 and His96. A Pros-methylhistidine modification is found at His107.

Belongs to the S-100 family. Homodimer. Preferentially exists as a heterodimer or heterotetramer with S100A8 known as calprotectin (S100A8/A9). S100A9 interacts with ATP2A2. S100A9 interacts with AGER, and with the heterodimeric complex formed by TLR4 and LY96 in the presence of calcium and/or zinc ions. S100A9 binds quinoline-3-carboxamides in the presence of calcium and/or zinc ions. S100A9 interacts with amyloid-beta protein 40. Calprotectin (S100A8/9) interacts with CEACAM3 and tubulin filaments in a calcium-dependent manner. Heterotetrameric calprotectin (S100A8/A9) interacts with ANXA6 and associates with tubulin filaments in activated monocytes. Calprotectin (S100A8/9) interacts with NCF2/P67PHOX, RAC1, RAC2, CYBA and CYBB. Calprotectin (S100A8/9) interacts with NOS2 to form the iNOS-S100A8/A9 transnitrosylase complex; induced by LDL(ox). Calprotectin (S100A8/9) interacts with CD69. In terms of processing, phosphorylated. Phosphorylation inhibits activation of tubulin polymerization. Post-translationally, methylation at His-107 by METTL9 reduces zinc-binding without affecting heterodimerization with S100A8.

It is found in the secreted. Its subcellular location is the cytoplasm. The protein localises to the cytoskeleton. It localises to the cell membrane. S100A9 is a calcium- and zinc-binding protein which plays a prominent role in the regulation of inflammatory processes and immune response. It can induce neutrophil chemotaxis, adhesion, can increase the bactericidal activity of neutrophils by promoting phagocytosis via activation of SYK, PI3K/AKT, and ERK1/2 and can induce degranulation of neutrophils by a MAPK-dependent mechanism. Predominantly found as calprotectin (S100A8/A9) which has a wide plethora of intra- and extracellular functions. The intracellular functions include: facilitating leukocyte arachidonic acid trafficking and metabolism, modulation of the tubulin-dependent cytoskeleton during migration of phagocytes and activation of the neutrophilic NADPH-oxidase. Also participates in regulatory T-cell differentiation together with CD69. Activates NADPH-oxidase by facilitating the enzyme complex assembly at the cell membrane, transferring arachidonic acid, an essential cofactor, to the enzyme complex and S100A8 contributes to the enzyme assembly by directly binding to NCF2/P67PHOX. The extracellular functions involve pro-inflammatory, antimicrobial, oxidant-scavenging and apoptosis-inducing activities. Its pro-inflammatory activity includes recruitment of leukocytes, promotion of cytokine and chemokine production, and regulation of leukocyte adhesion and migration. Acts as an alarmin or a danger associated molecular pattern (DAMP) molecule and stimulates innate immune cells via binding to pattern recognition receptors such as Toll-like receptor 4 (TLR4) and receptor for advanced glycation endproducts (AGER). Binding to TLR4 and AGER activates the MAP-kinase and NF-kappa-B signaling pathways resulting in the amplification of the pro-inflammatory cascade. Has antimicrobial activity towards bacteria and fungi and exerts its antimicrobial activity probably via chelation of Zn(2+) which is essential for microbial growth. Can induce cell death via autophagy and apoptosis and this occurs through the cross-talk of mitochondria and lysosomes via reactive oxygen species (ROS) and the process involves BNIP3. Can regulate neutrophil number and apoptosis by an anti-apoptotic effect; regulates cell survival via ITGAM/ITGB and TLR4 and a signaling mechanism involving MEK-ERK. Its role as an oxidant scavenger has a protective role in preventing exaggerated tissue damage by scavenging oxidants. The iNOS-S100A8/A9 transnitrosylase complex is proposed to direct selective inflammatory stimulus-dependent S-nitrosylation of multiple targets such as GAPDH, NXA5, EZR, MSN and VIM by recognizing a [IL]-x-C-x-x-[DE] motif. The protein is Protein S100-A9 (S100a9) of Mus musculus (Mouse).